The primary structure comprises 102 residues: MQKARIRLTGTDYQKVEEVCEKIKEIAERTGVNLAGPIPLPTRKLVVPIRKSPDGEGTATWDRWQMRVHKRLIDLDADERALRQLMRTQVPKDIGIEIVLES.

This sequence belongs to the universal ribosomal protein uS10 family. In terms of assembly, part of the 30S ribosomal subunit.

Its function is as follows. Involved in the binding of tRNA to the ribosomes. The protein is Small ribosomal subunit protein uS10 of Methanospirillum hungatei JF-1 (strain ATCC 27890 / DSM 864 / NBRC 100397 / JF-1).